The sequence spans 187 residues: uncharacterized protein (187 aa).

The disordered stretch occupies residues valine 131–glycine 187. Over residues glycine 162–aspartate 179 the composition is skewed to basic and acidic residues.

This is an uncharacterized protein from Haemophilus influenzae (Bacteriophage HP1).